The following is a 658-amino-acid chain: Outer dynein arm-docking complex subunit 1 (658 aa).

Coiled-coil stretches lie at residues 11 to 156, 186 to 234, and 303 to 380; these read KEVH…RYLN, REEA…KNDE, and NFIN…TDIQ. Disordered regions lie at residues 496 to 552 and 574 to 658; these read DEEE…SVSH and GAPV…RGYN. A phosphoserine mark is found at Ser-500, Ser-506, Ser-507, and Ser-509. 4 stretches are compositionally biased toward low complexity: residues 506–519, 574–583, 592–604, and 621–639; these read SSPS…QISL, GAPVSSRSSQ, TSSS…TGYL, and SMGS…HASS.

This sequence belongs to the ODA1/DCC2 family. In terms of assembly, component of the outer dynein arm-docking complex along with ODAD2, ODAD3, ODAD4 and CLXN. Interacts with ODAD3. Interacts with ODAD4; this interaction may facilitate the recruitment and/or attachment of outer dynein arm docking complex proteins including ODAD1, ODAD3, and ODAD4 to ciliary axonemes. Interacts with DNAH9. Interacts with MNS1. Interacts with PIERCE1 and PIERCE2; the interactions link the outer dynein arms docking complex (ODA-DC) to the internal microtubule inner proteins (MIP) in cilium axoneme. In terms of tissue distribution, expressed in motile ciliated tissues.

The protein localises to the cytoplasm. The protein resides in the cytoskeleton. It is found in the cilium axoneme. In terms of biological role, component of the outer dynein arm-docking complex that mediates outer dynein arms (ODA) binding onto the doublet microtubule. Involved in mediating assembly of both ODAs and their axonemal docking complex onto ciliary microtubules. In Mus musculus (Mouse), this protein is Outer dynein arm-docking complex subunit 1 (Odad1).